The sequence spans 183 residues: Ubiquinol-cytochrome c reductase iron-sulfur subunit (183 aa).

The chain crosses the membrane as a helical span at residues 21–41 (LIYGTTAVGAVGVALAVWPFI). In terms of domain architecture, Rieske spans 88-181 (IVVARAVDPA…YAFTDDTTVL (94 aa)). Residues C121, H123, C145, and H148 each contribute to the [2Fe-2S] cluster site. A disulfide bond links C126 and C147.

Belongs to the Rieske iron-sulfur protein family. The main subunits of complex b-c1 are: cytochrome b, cytochrome c1 and the Rieske protein. Requires [2Fe-2S] cluster as cofactor.

The protein resides in the cell inner membrane. It catalyses the reaction a quinol + 2 Fe(III)-[cytochrome c](out) = a quinone + 2 Fe(II)-[cytochrome c](out) + 2 H(+)(out). Its function is as follows. Component of the ubiquinol-cytochrome c reductase complex (complex III or cytochrome b-c1 complex), which is a respiratory chain that generates an electrochemical potential coupled to ATP synthesis. This Rhodospirillum rubrum protein is Ubiquinol-cytochrome c reductase iron-sulfur subunit (petA).